The following is a 102-amino-acid chain: NADH-quinone oxidoreductase subunit K 2 (102 aa).

A run of 3 helical transmembrane segments spans residues 4 to 24 (ITPV…TVGV), 30 to 50 (IVII…NLIA), and 62 to 82 (IFAI…LGIL).

The protein belongs to the complex I subunit 4L family. In terms of assembly, NDH-1 is composed of 14 different subunits. Subunits NuoA, H, J, K, L, M, N constitute the membrane sector of the complex.

Its subcellular location is the cell inner membrane. It carries out the reaction a quinone + NADH + 5 H(+)(in) = a quinol + NAD(+) + 4 H(+)(out). In terms of biological role, NDH-1 shuttles electrons from NADH, via FMN and iron-sulfur (Fe-S) centers, to quinones in the respiratory chain. The immediate electron acceptor for the enzyme in this species is believed to be ubiquinone. Couples the redox reaction to proton translocation (for every two electrons transferred, four hydrogen ions are translocated across the cytoplasmic membrane), and thus conserves the redox energy in a proton gradient. The polypeptide is NADH-quinone oxidoreductase subunit K 2 (Solibacter usitatus (strain Ellin6076)).